Reading from the N-terminus, the 83-residue chain is Short neurotoxin VAN-29 (83 aa).

The first 21 residues, 1-21 (MKTLLLTLVVVTIVCLDLGYT), serve as a signal peptide directing secretion. 4 cysteine pairs are disulfide-bonded: Cys24-Cys45, Cys38-Cys62, Cys64-Cys75, and Cys76-Cys81.

The protein belongs to the three-finger toxin family. Short-chain subfamily. Type I alpha-neurotoxin sub-subfamily. In terms of tissue distribution, expressed by the venom gland.

The protein localises to the secreted. Functionally, binds to muscle nicotinic acetylcholine receptor (nAChR) and inhibit acetylcholine from binding to the receptor, thereby impairing neuromuscular transmission. The chain is Short neurotoxin VAN-29 from Laticauda laticaudata (Blue-ringed sea krait).